The following is a 75-amino-acid chain: UPF0154 protein MYPU_1460 (75 aa).

Residues 8-28 traverse the membrane as a helical segment; sequence GLIVGLSILFFIIGGVVAFFV.

Belongs to the UPF0154 family.

It localises to the membrane. This Mycoplasmopsis pulmonis (strain UAB CTIP) (Mycoplasma pulmonis) protein is UPF0154 protein MYPU_1460.